The sequence spans 302 residues: Glutaminase (302 aa).

Substrate contacts are provided by Ser61, Asn111, Glu155, Asn162, Tyr186, Tyr238, and Val256.

Belongs to the glutaminase family. As to quaternary structure, homotetramer.

The enzyme catalyses L-glutamine + H2O = L-glutamate + NH4(+). This is Glutaminase from Ectopseudomonas mendocina (strain ymp) (Pseudomonas mendocina).